We begin with the raw amino-acid sequence, 262 residues long: Phosphonates import ATP-binding protein PhnC (262 aa).

The region spanning 5–253 (IRVEKLAKTF…RFDHLYRSIN (249 aa)) is the ABC transporter domain. An ATP-binding site is contributed by 37–44 (GPSGSGKS).

The protein belongs to the ABC transporter superfamily. Phosphonates importer (TC 3.A.1.9.1) family. As to quaternary structure, the complex is composed of two ATP-binding proteins (PhnC), two transmembrane proteins (PhnE) and a solute-binding protein (PhnD).

Its subcellular location is the cell inner membrane. It carries out the reaction phosphonate(out) + ATP + H2O = phosphonate(in) + ADP + phosphate + H(+). Its function is as follows. Part of the ABC transporter complex PhnCDE involved in phosphonates import. Responsible for energy coupling to the transport system. The chain is Phosphonates import ATP-binding protein PhnC from Shigella boydii serotype 4 (strain Sb227).